A 377-amino-acid polypeptide reads, in one-letter code: Chaperone protein DnaJ (377 aa).

The region spanning D5–G70 is the J domain. A CR-type zinc finger spans residues G132–Y210. Zn(2+)-binding residues include C145, C148, C162, C165, C184, C187, C198, and C201. CXXCXGXG motif repeat units lie at residues C145–G152, C162–G169, C184–G191, and C198–G205.

Belongs to the DnaJ family. Homodimer. The cofactor is Zn(2+).

The protein localises to the cytoplasm. Participates actively in the response to hyperosmotic and heat shock by preventing the aggregation of stress-denatured proteins and by disaggregating proteins, also in an autonomous, DnaK-independent fashion. Unfolded proteins bind initially to DnaJ; upon interaction with the DnaJ-bound protein, DnaK hydrolyzes its bound ATP, resulting in the formation of a stable complex. GrpE releases ADP from DnaK; ATP binding to DnaK triggers the release of the substrate protein, thus completing the reaction cycle. Several rounds of ATP-dependent interactions between DnaJ, DnaK and GrpE are required for fully efficient folding. Also involved, together with DnaK and GrpE, in the DNA replication of plasmids through activation of initiation proteins. The protein is Chaperone protein DnaJ of Buchnera aphidicola subsp. Acyrthosiphon pisum (strain 5A).